The following is a 641-amino-acid chain: Mannosyl-oligosaccharide 1,2-alpha-mannosidase IB (641 aa).

Residue T2 is modified to N-acetylthreonine. The Cytoplasmic portion of the chain corresponds to T2–K36. A helical; Signal-anchor for type II membrane protein membrane pass occupies residues F37–L57. Residues P58–R641 lie on the Lumenal side of the membrane. Residues C462 and C494 are joined by a disulfide bond. The active-site Proton donor is the E508. T619 contributes to the Ca(2+) binding site. A glycan (N-linked (GlcNAc...) asparagine) is linked at N631.

Belongs to the glycosyl hydrolase 47 family. It depends on Ca(2+) as a cofactor.

It is found in the golgi apparatus membrane. The enzyme catalyses N(4)-(alpha-D-Man-(1-&gt;2)-alpha-D-Man-(1-&gt;2)-alpha-D-Man-(1-&gt;3)-[alpha-D-Man-(1-&gt;2)-alpha-D-Man-(1-&gt;3)-[alpha-D-Man-(1-&gt;2)-alpha-D-Man-(1-&gt;6)]-alpha-D-Man-(1-&gt;6)]-beta-D-Man-(1-&gt;4)-beta-D-GlcNAc-(1-&gt;4)-beta-D-GlcNAc)-L-asparaginyl-[protein] (N-glucan mannose isomer 9A1,2,3B1,2,3) + 4 H2O = N(4)-(alpha-D-Man-(1-&gt;3)-[alpha-D-Man-(1-&gt;3)-[alpha-D-Man-(1-&gt;6)]-alpha-D-Man-(1-&gt;6)]-beta-D-Man-(1-&gt;4)-beta-D-GlcNAc-(1-&gt;4)-beta-D-GlcNAc)-L-asparaginyl-[protein] (N-glucan mannose isomer 5A1,2) + 4 beta-D-mannose. It carries out the reaction N(4)-(alpha-D-Man-(1-&gt;2)-alpha-D-Man-(1-&gt;2)-alpha-D-Man-(1-&gt;3)-[alpha-D-Man-(1-&gt;3)-[alpha-D-Man-(1-&gt;2)-alpha-D-Man-(1-&gt;6)]-alpha-D-Man-(1-&gt;6)]-beta-D-Man-(1-&gt;4)-beta-D-GlcNAc-(1-&gt;4)-beta-D-GlcNAc)-L-asparaginyl-[protein] (N-glucan mannose isomer 8A1,2,3B1,3) + 3 H2O = N(4)-(alpha-D-Man-(1-&gt;3)-[alpha-D-Man-(1-&gt;3)-[alpha-D-Man-(1-&gt;6)]-alpha-D-Man-(1-&gt;6)]-beta-D-Man-(1-&gt;4)-beta-D-GlcNAc-(1-&gt;4)-beta-D-GlcNAc)-L-asparaginyl-[protein] (N-glucan mannose isomer 5A1,2) + 3 beta-D-mannose. It functions in the pathway protein modification; protein glycosylation. With respect to regulation, inhibited by both 1-deoxymannojirimycin and kifunensine. Involved in the maturation of Asn-linked oligosaccharides. Progressively trim alpha-1,2-linked mannose residues from Man(9)GlcNAc(2) to produce Man(5)GlcNAc(2). In Mus musculus (Mouse), this protein is Mannosyl-oligosaccharide 1,2-alpha-mannosidase IB (Man1a2).